The sequence spans 384 residues: Cell division protein FtsZ (384 aa).

GTP contacts are provided by residues 20–24, 107–109, E138, R142, and N186; these read GGGGN and GTG.

The protein belongs to the FtsZ family. In terms of assembly, homodimer. Polymerizes to form a dynamic ring structure in a strictly GTP-dependent manner. Interacts directly with several other division proteins.

The protein localises to the cytoplasm. Functionally, essential cell division protein that forms a contractile ring structure (Z ring) at the future cell division site. The regulation of the ring assembly controls the timing and the location of cell division. One of the functions of the FtsZ ring is to recruit other cell division proteins to the septum to produce a new cell wall between the dividing cells. Binds GTP and shows GTPase activity. This chain is Cell division protein FtsZ, found in Buchnera aphidicola subsp. Schizaphis graminum (strain Sg).